The primary structure comprises 337 residues: Alcohol dehydrogenase (337 aa).

Zn(2+) is bound by residues C38, H61, C92, C95, C98, C106, and C148. NAD(+) contacts are provided by residues G172 to G177, D195, K200, V260 to L262, and R331.

The protein belongs to the zinc-containing alcohol dehydrogenase family. The cofactor is Zn(2+).

It carries out the reaction a primary alcohol + NAD(+) = an aldehyde + NADH + H(+). It catalyses the reaction a secondary alcohol + NAD(+) = a ketone + NADH + H(+). Substrate inhibition is not observed with any alcohols, and the enzyme-NADH dissociation is not considered to be a rate-limiting step. In terms of biological role, NAD(+)-dependent alcohol dehydrogenase. The polypeptide is Alcohol dehydrogenase (adhT) (Geobacillus stearothermophilus (Bacillus stearothermophilus)).